The chain runs to 241 residues: DnaJ homolog subfamily B member 6 (241 aa).

Residues 2 to 146 form an interaction with HSP70 region; the sequence is VDYYEVLGVQ…TGSFFSAFSG (145 aa). The J domain occupies 3–69; the sequence is DYYEVLGVQR…KKRDIYDKYG (67 aa). Residues 119–241 form an interaction with KRT18 region; the sequence is FEDFFGNRRG…KEQLLRLDNK (123 aa). Residue Arg-135 is modified to Omega-N-methylarginine.

As to quaternary structure, homooligomer. Interacts with BAG3, HSPB8 and STUB1. Interacts with ALKBH1. Interacts with HSP70, KRT18 and PTTG.

The protein localises to the cytoplasm. The protein resides in the perinuclear region. It localises to the nucleus. Its subcellular location is the myofibril. It is found in the sarcomere. The protein localises to the z line. Its function is as follows. Has a stimulatory effect on the ATPase activity of HSP70 in a dose-dependent and time-dependent manner and hence acts as a co-chaperone of HSP70. Plays an indispensable role in the organization of KRT8/KRT18 filaments. Acts as an endogenous molecular chaperone for neuronal proteins including huntingtin. Suppresses aggregation and toxicity of polyglutamine-containing, aggregation-prone proteins. Also reduces cellular toxicity and caspase-3 activity. This Macaca fascicularis (Crab-eating macaque) protein is DnaJ homolog subfamily B member 6.